Consider the following 375-residue polypeptide: Queuine tRNA-ribosyltransferase (375 aa).

D94 (proton acceptor) is an active-site residue. Residues 94 to 98, D148, Q191, and G218 contribute to the substrate site; that span reads DSGGF. Positions 249 to 255 are RNA binding; it reads GVGSPDD. Catalysis depends on D268, which acts as the Nucleophile. Positions 273 to 277 are RNA binding; important for wobble base 34 recognition; the sequence is TRIAR. Residues C306, C308, C311, and H337 each contribute to the Zn(2+) site.

The protein belongs to the queuine tRNA-ribosyltransferase family. Homodimer. Within each dimer, one monomer is responsible for RNA recognition and catalysis, while the other monomer binds to the replacement base PreQ1. Zn(2+) is required as a cofactor.

The catalysed reaction is 7-aminomethyl-7-carbaguanine + guanosine(34) in tRNA = 7-aminomethyl-7-carbaguanosine(34) in tRNA + guanine. Its pathway is tRNA modification; tRNA-queuosine biosynthesis. Its function is as follows. Catalyzes the base-exchange of a guanine (G) residue with the queuine precursor 7-aminomethyl-7-deazaguanine (PreQ1) at position 34 (anticodon wobble position) in tRNAs with GU(N) anticodons (tRNA-Asp, -Asn, -His and -Tyr). Catalysis occurs through a double-displacement mechanism. The nucleophile active site attacks the C1' of nucleotide 34 to detach the guanine base from the RNA, forming a covalent enzyme-RNA intermediate. The proton acceptor active site deprotonates the incoming PreQ1, allowing a nucleophilic attack on the C1' of the ribose to form the product. After dissociation, two additional enzymatic reactions on the tRNA convert PreQ1 to queuine (Q), resulting in the hypermodified nucleoside queuosine (7-(((4,5-cis-dihydroxy-2-cyclopenten-1-yl)amino)methyl)-7-deazaguanosine). The sequence is that of Queuine tRNA-ribosyltransferase from Thermoanaerobacter pseudethanolicus (strain ATCC 33223 / 39E) (Clostridium thermohydrosulfuricum).